The chain runs to 556 residues: Capsid vertex component 2 (556 aa).

Residues 1-54 are interaction with major capsid protein/MCP; that stretch reads MWPVGSSYTRACSVQRWPKRCVYWAPSPQNVLEINPHRFQESRRSAALYRKHVV. The tract at residues 104–136 is disordered; the sequence is QPASSNQGGARPQTDPHVPQPAPAIPSAPPKEN. Pro residues predominate over residues 121 to 132; sequence VPQPAPAIPSAP.

This sequence belongs to the herpesviridae CVC2 protein family. In terms of assembly, heterodimerizes with CVC1. Interacts with major capsid protein/MCP and triplex capsid protein 1/TRX1 at the pentamer vertices. Interacts with the large tegument protein/LTP.

It localises to the virion. It is found in the host nucleus. In terms of biological role, capsid vertex-specific component that plays a role during viral DNA encapsidation, assuring correct genome cleavage and presumably stabilizing capsids that contain full-length viral genomes. Participates in the interaction between the capsid and the tegument through interaction with the large tegument protein/LTP. In Connochaetes taurinus (Blue wildebeest), this protein is Capsid vertex component 2.